A 356-amino-acid chain; its full sequence is Tyrosine recombinase XerS (356 aa).

The Core-binding (CB) domain maps to 16–121 (IMPWYVLDYY…ALSSLYKYLT (106 aa)). In terms of domain architecture, Tyr recombinase spans 169-354 (AFLDYVDKEY…VNDEQKNALD (186 aa)). Residues Arg210, Lys234, His306, Arg309, and His332 contribute to the active site. Tyr341 functions as the O-(3'-phospho-DNA)-tyrosine intermediate in the catalytic mechanism.

The protein belongs to the 'phage' integrase family. XerS subfamily.

The protein resides in the cytoplasm. FtsK is required for recombination. Functionally, site-specific tyrosine recombinase, which acts by catalyzing the cutting and rejoining of the recombining DNA molecules. Essential to convert dimers of the bacterial chromosome into monomers to permit their segregation at cell division. The chain is Tyrosine recombinase XerS from Streptococcus equi subsp. equi (strain 4047).